The primary structure comprises 252 residues: Sororin (252 aa).

Disordered stretches follow at residues 1–48 (MSGR…WPKT) and 72–142 (AVQS…SKKV). A phosphoserine mark is found at Ser21, Ser33, Ser35, Ser75, Ser79, and Ser83. The segment covering 86–104 (LEKENEPPGRELTKEDLFK) has biased composition (basic and acidic residues). Positions 88-90 (KEN) match the KEN box motif. Thr98 is subject to Phosphothreonine. Over residues 105–116 (THSVPATPTSTP) the composition is skewed to low complexity. A Phosphoserine modification is found at Ser107. Residues Thr111 and Thr115 each carry the phosphothreonine modification. Residues 124-140 (SSSKEGELDARDLEMSK) are compositionally biased toward basic and acidic residues. Ser154 carries the phosphoserine modification. Thr159 bears the Phosphothreonine mark. An FGF motif motif is present at residues 166–168 (FGF). The interval 199 to 222 (WAPDMTLPGISPPPEKQKRKKKKM) is disordered. Position 209 is a phosphoserine (Ser209). A C-terminal Sororin domain region spans residues 230-252 (LDEWAAAMNAEFEAAEQFDLLVE).

Belongs to the sororin family. Interacts with the APC/C complex. Interacts with the chromatin-bound cohesin complex; the interaction is indirect, occurs after DNA replication and requires acetylation of the cohesin component SMC3. Interacts (via the FGF motif) with PDS5A and PDS5B; the interaction is direct and prevents the interaction of PDS5A with WAPL. Post-translationally, phosphorylated. Phosphorylation, as cells enter mitosis, disrupts the interaction with PDS5A and relieves the inhibition of WAPL by CDCA5. Ubiquitinated by the APC/C complex in G1, leading to its degradation.

The protein localises to the nucleus. It localises to the chromosome. It is found in the cytoplasm. Its function is as follows. Regulator of sister chromatid cohesion in mitosis stabilizing cohesin complex association with chromatin. May antagonize the action of WAPL which stimulates cohesin dissociation from chromatin. Cohesion ensures that chromosome partitioning is accurate in both meiotic and mitotic cells and plays an important role in DNA repair. Required for efficient DNA double-stranded break repair. The polypeptide is Sororin (CDCA5) (Homo sapiens (Human)).